Reading from the N-terminus, the 138-residue chain is Large ribosomal subunit protein uL16c (138 aa).

This sequence belongs to the universal ribosomal protein uL16 family. As to quaternary structure, part of the 50S ribosomal subunit.

Its subcellular location is the plastid. The protein localises to the chloroplast. This is Large ribosomal subunit protein uL16c from Physcomitrium patens (Spreading-leaved earth moss).